The sequence spans 269 residues: Energy-coupling factor transporter ATP-binding protein EcfA1 (269 aa).

The ABC transporter domain occupies 8 to 242 (ITFNHVRFKY…GDGLTEIGLD (235 aa)). 42–49 (GHNGSGKS) contacts ATP.

This sequence belongs to the ABC transporter superfamily. Energy-coupling factor EcfA family. Forms a stable energy-coupling factor (ECF) transporter complex composed of 2 membrane-embedded substrate-binding proteins (S component), 2 ATP-binding proteins (A component) and 2 transmembrane proteins (T component).

The protein resides in the cell membrane. Its function is as follows. ATP-binding (A) component of a common energy-coupling factor (ECF) ABC-transporter complex. Unlike classic ABC transporters this ECF transporter provides the energy necessary to transport a number of different substrates. This Staphylococcus saprophyticus subsp. saprophyticus (strain ATCC 15305 / DSM 20229 / NCIMB 8711 / NCTC 7292 / S-41) protein is Energy-coupling factor transporter ATP-binding protein EcfA1.